Consider the following 478-residue polypeptide: Adenylosuccinate lyase (478 aa).

Substrate-binding positions include 14–15 (RY), 81–83 (KHD), and 107–108 (TS). His155 (proton donor/acceptor) is an active-site residue. Gln237 provides a ligand contact to substrate. Ser285 (proton donor/acceptor) is an active-site residue. The substrate site is built by Arg299, Arg325, Ser330, and Arg334.

It belongs to the lyase 1 family. Adenylosuccinate lyase subfamily. As to quaternary structure, homotetramer. Residues from neighboring subunits contribute catalytic and substrate-binding residues to each active site.

The catalysed reaction is N(6)-(1,2-dicarboxyethyl)-AMP = fumarate + AMP. The enzyme catalyses (2S)-2-[5-amino-1-(5-phospho-beta-D-ribosyl)imidazole-4-carboxamido]succinate = 5-amino-1-(5-phospho-beta-D-ribosyl)imidazole-4-carboxamide + fumarate. It participates in purine metabolism; AMP biosynthesis via de novo pathway; AMP from IMP: step 2/2. Its pathway is purine metabolism; IMP biosynthesis via de novo pathway; 5-amino-1-(5-phospho-D-ribosyl)imidazole-4-carboxamide from 5-amino-1-(5-phospho-D-ribosyl)imidazole-4-carboxylate: step 2/2. Catalyzes two non-sequential steps in de novo AMP synthesis: converts (S)-2-(5-amino-1-(5-phospho-D-ribosyl)imidazole-4-carboxamido)succinate (SAICAR) to fumarate plus 5-amino-1-(5-phospho-D-ribosyl)imidazole-4-carboxamide, and thereby also contributes to de novo IMP synthesis, and converts succinyladenosine monophosphate (SAMP) to AMP and fumarate. The protein is Adenylosuccinate lyase of Caenorhabditis briggsae.